Consider the following 60-residue polypeptide: Ixodegrin-like peptide (60 aa).

An N-terminal signal peptide occupies residues 1–19; sequence MNAVFIAALLILGTSTFDA. The short motif at 49 to 51 is the Cell attachment site element; that stretch reads RGD.

This sequence belongs to the ixodegrin family. In terms of processing, contains 3 disulfide bonds. In terms of tissue distribution, expressed in salivary glands.

It localises to the secreted. Tick salivary platelet aggregation inhibitor that plays an important part in the anti-hemostatic strategy of ticks. Inhibits platelet aggregation induced by ADP, thrombin and thromboxane A2 (TXA2). Blocks platelet adhesion to soluble collagen (most probably through the binding to alpha-2/beta-1 integrin (ITGA2/ITGB1)) and binds to purified glycoprotein IIb/IIIa (ITGA2B/ITGB3) in a dose-dependent manner. In vivo, reduces thrombus weight effectively in a rat arteriovenous shunt model and inhibits thrombosis in a carrageenan-induced mouse tail thrombosis model. The polypeptide is Ixodegrin-like peptide (Ixodes scapularis (Black-legged tick)).